We begin with the raw amino-acid sequence, 370 residues long: Aminomethyltransferase (370 aa).

It belongs to the GcvT family. As to quaternary structure, the glycine cleavage system is composed of four proteins: P, T, L and H.

It catalyses the reaction N(6)-[(R)-S(8)-aminomethyldihydrolipoyl]-L-lysyl-[protein] + (6S)-5,6,7,8-tetrahydrofolate = N(6)-[(R)-dihydrolipoyl]-L-lysyl-[protein] + (6R)-5,10-methylene-5,6,7,8-tetrahydrofolate + NH4(+). In terms of biological role, the glycine cleavage system catalyzes the degradation of glycine. This is Aminomethyltransferase from Corynebacterium aurimucosum (strain ATCC 700975 / DSM 44827 / CIP 107346 / CN-1) (Corynebacterium nigricans).